The chain runs to 121 residues: uncharacterized protein (121 aa).

A run of 3 helical transmembrane segments spans residues 12-32 (MIGIAALAVGIVLGLVFHPGV), 35-55 (VIQPYLPIAVVAALDAVFGGL), and 67-87 (VFVVSFVFNVLVAALIVYVGD).

This sequence belongs to the sbp family.

It is found in the cell membrane. This is an uncharacterized protein from Mycobacterium bovis (strain ATCC BAA-935 / AF2122/97).